A 233-amino-acid polypeptide reads, in one-letter code: MASKVLPQALLVIPSNHSLQCPPLKKQLGFPIDSNRRFSLSSNCRSNLMVSRASSNLFSSNFSSIFSFPARNSFVVRSEAEDSSDAPAESVAVVAEEELPVESEAEAEERPPRQQRVKLGDIMGILNKKAVHAAEELRPVPGIRTGDIVQIRLEVPENKRRLSVYKGIVISRQNAGIHTTIRIRRIIAGVGVEIVFPLYSPNIKEIKVVSHRKVRKARLYYLRDKLPRLSTFK.

A chloroplast-targeting transit peptide spans 1–77 (MASKVLPQAL…FPARNSFVVR (77 aa)).

In terms of assembly, component of the chloroplast large ribosomal subunit (LSU). Mature 70S chloroplast ribosomes of higher plants consist of a small (30S) and a large (50S) subunit. The 30S small subunit contains 1 molecule of ribosomal RNA (16S rRNA) and 24 different proteins. The 50S large subunit contains 3 rRNA molecules (23S, 5S and 4.5S rRNA) and 33 different proteins.

The protein localises to the plastid. Its subcellular location is the chloroplast. Functionally, component of the chloroplast ribosome (chloro-ribosome), a dedicated translation machinery responsible for the synthesis of chloroplast genome-encoded proteins, including proteins of the transcription and translation machinery and components of the photosynthetic apparatus. The polypeptide is Large ribosomal subunit protein bL19c (RPL19) (Spinacia oleracea (Spinach)).